We begin with the raw amino-acid sequence, 248 residues long: Small ribosomal subunit protein eS6 (248 aa).

Positions Leu213–Lys248 are disordered. The segment covering Ala223 to Lys248 has biased composition (basic and acidic residues).

Belongs to the eukaryotic ribosomal protein eS6 family. As to quaternary structure, component of the small ribosomal subunit. Part of the small subunit (SSU) processome, composed of more than 70 proteins and the RNA chaperone small nucleolar RNA (snoRNA) U3. Ribosomal protein S6 is the major substrate of protein kinases in eukaryote ribosomes.

The protein localises to the cytoplasm. Its subcellular location is the nucleus. It is found in the nucleolus. Functionally, component of the 40S small ribosomal subunit. Plays an important role in controlling cell growth and proliferation through the selective translation of particular classes of mRNA. Part of the small subunit (SSU) processome, first precursor of the small eukaryotic ribosomal subunit. During the assembly of the SSU processome in the nucleolus, many ribosome biogenesis factors, an RNA chaperone and ribosomal proteins associate with the nascent pre-rRNA and work in concert to generate RNA folding, modifications, rearrangements and cleavage as well as targeted degradation of pre-ribosomal RNA by the RNA exosome. The protein is Small ribosomal subunit protein eS6 (RpS6) of Glossina morsitans morsitans (Savannah tsetse fly).